The sequence spans 599 residues: MSQTAYRTHHATEVTEALVGQKVTLAGWVDRRRDHGGVAFIDLRDSTGLVQVVIYDEDMARPLRSEFVIQITGEVRLRPDGNENTHLATGKIEVVAETIEILAKSDALPFQVSTALENESENKLPGEDVRLKYRYLDLRRPSMQHNLKLRSDMAKAARHALEDMDFTEVETPTFIKSTPEGARDFVVPARLVPGSWYALPQSPQLLKQLLMVSGVERYYQLARCYRDEDFRADRQPEFTQLDMEMAYVDQEDVMAMTEKVIAAIWKSAGYEVQLPLPRITWKDAMDKYGSDKPDLRFGNPLVELTEYFKNTPFRVFQAPYVGAVVFKGGAATPRRQFDAWQDWARQRGAKGLAYVVFGENGELKGPVAKNLSDEERNGLREAVGAEEGDAVFFAAGSRESAQLLLGAVRVELASREGLLDPKKFAFTWVVDFPLFKPTDDPDDDDVAVGHSKWTSMHHPFTMPSKDWIDKFDKDPEHAMSDSYDIVCNGEEMGGGSVRIHRDDIQARVLDVLGITKEEADEKFGFLLEAFKYGAPPHAGLALGWDRTVSILAGADSIRDVIAFPKAGGGRDPLTGAPAPISDEQRAETGVDYDPDADEN.

Residue glutamate 180 participates in L-aspartate binding. Residues 204 to 207 (QLLK) are aspartate. Position 226 (arginine 226) interacts with L-aspartate. Residues 226–228 (RDE) and glutamine 235 contribute to the ATP site. Histidine 457 provides a ligand contact to L-aspartate. Residue glutamate 491 participates in ATP binding. Position 498 (arginine 498) interacts with L-aspartate. 543 to 546 (GWDR) is a binding site for ATP. The tract at residues 565–599 (KAGGGRDPLTGAPAPISDEQRAETGVDYDPDADEN) is disordered. Residues 590–599 (VDYDPDADEN) are compositionally biased toward acidic residues.

It belongs to the class-II aminoacyl-tRNA synthetase family. Type 1 subfamily. As to quaternary structure, homodimer.

The protein resides in the cytoplasm. It catalyses the reaction tRNA(Asx) + L-aspartate + ATP = L-aspartyl-tRNA(Asx) + AMP + diphosphate. In terms of biological role, aspartyl-tRNA synthetase with relaxed tRNA specificity since it is able to aspartylate not only its cognate tRNA(Asp) but also tRNA(Asn). Reaction proceeds in two steps: L-aspartate is first activated by ATP to form Asp-AMP and then transferred to the acceptor end of tRNA(Asp/Asn). In Bifidobacterium longum (strain DJO10A), this protein is Aspartate--tRNA(Asp/Asn) ligase.